The following is a 455-amino-acid chain: Epoxide hydrolase 1 (455 aa).

Residues 1–21 (MWLEILLTSVLGFAIYWFISR) form a helical; Signal-anchor for type III membrane protein membrane-spanning segment. The Cytoplasmic portion of the chain corresponds to 22–455 (DKEETLPLED…RKFLSVLERQ (434 aa)). Asp226 (nucleophile) is an active-site residue. Arg295 is subject to Dimethylated arginine. Tyr374 serves as the catalytic Proton donor. His431 acts as the Proton acceptor in catalysis.

The protein belongs to the peptidase S33 family. As to expression, found in liver.

The protein resides in the microsome membrane. It localises to the endoplasmic reticulum membrane. The enzyme catalyses cis-stilbene oxide + H2O = (1R,2R)-hydrobenzoin. The catalysed reaction is 1-(4-methoxyphenyl)-N-methyl-N-[(3-methyloxetan-3-yl)methyl]methanamine + H2O = 2-{[(4-methoxybenzyl)(methyl)amino]methyl}-2-methylpropane-1,3-diol. It catalyses the reaction 8,9-epoxy-(5Z,11Z,14Z)-eicosatrienoate + H2O = 8,9-dihydroxy-(5Z,11Z,14Z)-eicosatrienoate. It carries out the reaction 11,12-epoxy-(5Z,8Z,14Z)-eicosatrienoate + H2O = 11,12-dihydroxy-(5Z,8Z,14Z)-eicosatrienoate. The enzyme catalyses 2-(5Z,8Z,11Z,14Z-eicosatetraenoyl)-glycerol + H2O = glycerol + (5Z,8Z,11Z,14Z)-eicosatetraenoate + H(+). Inhibited by 10-hydroxystearamide and methoxy-arachidonyl fluorophosphate. Biotransformation enzyme that catalyzes the hydrolysis of arene and aliphatic epoxides to less reactive and more water soluble dihydrodiols by the trans addition of water. Plays a role in the metabolism of endogenous lipids such as epoxide-containing fatty acids. Metabolizes the abundant endocannabinoid 2-arachidonoylglycerol (2-AG) to free arachidonic acid (AA) and glycerol. Binds 20(S)-hydroxycholesterol (20(S)-OHC). This chain is Epoxide hydrolase 1, found in Homo sapiens (Human).